The following is a 269-amino-acid chain: MEMO1 family protein TV1383 (269 aa).

Belongs to the MEMO1 family.

This Thermoplasma volcanium (strain ATCC 51530 / DSM 4299 / JCM 9571 / NBRC 15438 / GSS1) protein is MEMO1 family protein TV1383.